A 118-amino-acid polypeptide reads, in one-letter code: MITTIVISIALILVIIGSLISALAAIGILRLDDVYARAHAAGKAATLGAMLLISGVFLFFIGREGYVNMQLIVGILFILITGPLASHLIIKSAYNLNTPASKRTKHDEIKKDLKNTKL.

Transmembrane regions (helical) follow at residues 9–29, 41–61, and 70–90; these read IALI…IGIL, AGKA…LFFI, and QLIV…HLII.

Belongs to the CPA3 antiporters (TC 2.A.63) subunit G family. May form a heterooligomeric complex that consists of seven subunits: mnhA1, mnhB1, mnhC1, mnhD1, mnhE1, mnhF1 and mnhG1.

It localises to the cell membrane. Functionally, mnh complex is a Na(+)/H(+) antiporter involved in Na(+) excretion. This is Na(+)/H(+) antiporter subunit G1 (mnhG1) from Staphylococcus saprophyticus subsp. saprophyticus (strain ATCC 15305 / DSM 20229 / NCIMB 8711 / NCTC 7292 / S-41).